A 367-amino-acid polypeptide reads, in one-letter code: Uroporphyrinogen decarboxylase (367 aa).

Residues 27–31, Asp77, Tyr157, Thr212, and His333 each bind substrate; that span reads RQAGR.

It belongs to the uroporphyrinogen decarboxylase family. As to quaternary structure, homodimer.

It localises to the cytoplasm. It catalyses the reaction uroporphyrinogen III + 4 H(+) = coproporphyrinogen III + 4 CO2. It functions in the pathway porphyrin-containing compound metabolism; protoporphyrin-IX biosynthesis; coproporphyrinogen-III from 5-aminolevulinate: step 4/4. In terms of biological role, catalyzes the decarboxylation of four acetate groups of uroporphyrinogen-III to yield coproporphyrinogen-III. This chain is Uroporphyrinogen decarboxylase, found in Cupriavidus metallidurans (strain ATCC 43123 / DSM 2839 / NBRC 102507 / CH34) (Ralstonia metallidurans).